Here is a 141-residue protein sequence, read N- to C-terminus: Nucleoside diphosphate kinase (141 aa).

Residues lysine 11, phenylalanine 59, arginine 87, threonine 93, arginine 104, and asparagine 114 each contribute to the ATP site. Catalysis depends on histidine 117, which acts as the Pros-phosphohistidine intermediate.

Belongs to the NDK family. In terms of assembly, homotetramer. Requires Mg(2+) as cofactor.

Its subcellular location is the cytoplasm. The enzyme catalyses a 2'-deoxyribonucleoside 5'-diphosphate + ATP = a 2'-deoxyribonucleoside 5'-triphosphate + ADP. The catalysed reaction is a ribonucleoside 5'-diphosphate + ATP = a ribonucleoside 5'-triphosphate + ADP. Its function is as follows. Major role in the synthesis of nucleoside triphosphates other than ATP. The ATP gamma phosphate is transferred to the NDP beta phosphate via a ping-pong mechanism, using a phosphorylated active-site intermediate. The polypeptide is Nucleoside diphosphate kinase (Yersinia enterocolitica serotype O:8 / biotype 1B (strain NCTC 13174 / 8081)).